The following is a 76-amino-acid chain: Small ribosomal subunit protein bS18 (76 aa).

It belongs to the bacterial ribosomal protein bS18 family. As to quaternary structure, part of the 30S ribosomal subunit. Forms a tight heterodimer with protein bS6.

Functionally, binds as a heterodimer with protein bS6 to the central domain of the 16S rRNA, where it helps stabilize the platform of the 30S subunit. The polypeptide is Small ribosomal subunit protein bS18 (Petrotoga mobilis (strain DSM 10674 / SJ95)).